The chain runs to 78 residues: Small ribosomal subunit protein bS20 (78 aa).

Belongs to the bacterial ribosomal protein bS20 family.

Its function is as follows. Binds directly to 16S ribosomal RNA. This chain is Small ribosomal subunit protein bS20, found in Streptococcus pneumoniae serotype 4 (strain ATCC BAA-334 / TIGR4).